The chain runs to 476 residues: Glutamate--tRNA ligase (476 aa).

Positions 9–19 (PSPTGLFHIGT) match the 'HIGH' region motif. Residues 248–252 (KLSKR) carry the 'KMSKS' region motif. Lys251 is a binding site for ATP.

The protein belongs to the class-I aminoacyl-tRNA synthetase family. Glutamate--tRNA ligase type 1 subfamily. As to quaternary structure, monomer.

The protein resides in the cytoplasm. The enzyme catalyses tRNA(Glu) + L-glutamate + ATP = L-glutamyl-tRNA(Glu) + AMP + diphosphate. Functionally, catalyzes the attachment of glutamate to tRNA(Glu) in a two-step reaction: glutamate is first activated by ATP to form Glu-AMP and then transferred to the acceptor end of tRNA(Glu). In Prochlorococcus marinus (strain AS9601), this protein is Glutamate--tRNA ligase.